A 286-amino-acid chain; its full sequence is Shikimate dehydrogenase (NADP(+)) (286 aa).

Shikimate is bound by residues S19–S21 and T66. The active-site Proton acceptor is K70. Shikimate contacts are provided by N91 and D107. Residues G129 to A133 and L229 each bind NADP(+). Y231 is a binding site for shikimate. G252 contacts NADP(+).

The protein belongs to the shikimate dehydrogenase family. Homodimer.

The catalysed reaction is shikimate + NADP(+) = 3-dehydroshikimate + NADPH + H(+). It functions in the pathway metabolic intermediate biosynthesis; chorismate biosynthesis; chorismate from D-erythrose 4-phosphate and phosphoenolpyruvate: step 4/7. In terms of biological role, involved in the biosynthesis of the chorismate, which leads to the biosynthesis of aromatic amino acids. Catalyzes the reversible NADPH linked reduction of 3-dehydroshikimate (DHSA) to yield shikimate (SA). The chain is Shikimate dehydrogenase (NADP(+)) from Prochlorococcus marinus (strain MIT 9312).